The chain runs to 394 residues: Monoterpene synthase FDS-5, chloroplastic (394 aa).

The N-terminal 65 residues, 1–65 (MASFISLSSK…NLNSQFMQVY (65 aa)), are a transit peptide targeting the chloroplast. Isopentenyl diphosphate contacts are provided by K100, R103, and Q138. Positions 145 and 149 each coordinate Mg(2+). The DDXXD motif motif lies at 145–149 (DDMMD). R154 contacts dimethylallyl diphosphate. Residue R155 coordinates isopentenyl diphosphate. Dimethylallyl diphosphate is bound by residues K242, Q281, K298, and K307.

The protein belongs to the FPP/GGPP synthase family. Mg(2+) is required as a cofactor. Requires Mn(2+) as cofactor.

The protein resides in the plastid. It is found in the chloroplast. It catalyses the reaction isopentenyl diphosphate + dimethylallyl diphosphate = (2E)-geranyl diphosphate + diphosphate. It carries out the reaction 2 dimethylallyl diphosphate = (R,R)-chrysanthemyl diphosphate + diphosphate. The catalysed reaction is 2 dimethylallyl diphosphate = (R)-lavandulyl diphosphate + diphosphate. In terms of biological role, condenses two molecules of dimethylallyl diphosphate (DMAPP) to produce mainly an irregular monoterpene, chrysanthemyl diphosphate (CPP) and lower amounts of a branched monoterpene, lavandulyl diphosphate (LPP). CPP is a precursor of the pyrethrin insecticides. When incubated with isopentenyl diphosphate (IPP) and DMAPP, catalyzes three competing isoprenoid condensation reactions, a chain elongation to give geranyl diphosphate (GPP), a cyclopropanation to give CPP and a branching to give LPP. The chain is Monoterpene synthase FDS-5, chloroplastic (FDS-5) from Artemisia spiciformis (Spiked big sagebrush).